The following is a 47-amino-acid chain: Sperm protamine P1 (47 aa).

It belongs to the protamine P1 family. As to expression, testis.

It localises to the nucleus. It is found in the chromosome. Protamines substitute for histones in the chromatin of sperm during the haploid phase of spermatogenesis. They compact sperm DNA into a highly condensed, stable and inactive complex. The protein is Sperm protamine P1 (PRM1) of Galeopterus variegatus (Malayan flying lemur).